We begin with the raw amino-acid sequence, 555 residues long: Phosphoglucomutase (555 aa).

The alpha-D-glucose 1,6-bisphosphate site is built by arginine 22 and serine 114. The active-site Phosphoserine intermediate is serine 114. Mg(2+) contacts are provided by serine 114, aspartate 279, aspartate 281, and aspartate 283. At serine 114 the chain carries Phosphoserine. Alpha-D-glucose 1,6-bisphosphate contacts are provided by aspartate 283, arginine 284, threonine 347, glutamate 366, serine 368, and lysine 379.

It belongs to the phosphohexose mutase family. As to quaternary structure, monomer. Requires Mg(2+) as cofactor.

The protein resides in the cytoplasm. The catalysed reaction is alpha-D-glucose 1-phosphate = alpha-D-glucose 6-phosphate. The enzyme catalyses O-phospho-L-seryl-[protein] + alpha-D-glucose 1-phosphate = alpha-D-glucose 1,6-bisphosphate + L-seryl-[protein]. It catalyses the reaction alpha-D-glucose 1,6-bisphosphate + L-seryl-[protein] = O-phospho-L-seryl-[protein] + alpha-D-glucose 6-phosphate. Catalyzes the reversible isomerization of alpha-D-glucose 1-phosphate to alpha-D-glucose 6-phosphate. The mechanism proceeds via the intermediate compound alpha-D-glucose 1,6-bisphosphate. Key enzyme in hexose metabolism. The reverse reaction is an essential step for biosynthesis because glucose 1-phosphate is the starting point for the synthesis of UDP-glucose, which acts as a precursor for the synthesis of oligosaccharides and trehalose. The chain is Phosphoglucomutase (pgmA) from Aspergillus fumigatus (strain ATCC MYA-4609 / CBS 101355 / FGSC A1100 / Af293) (Neosartorya fumigata).